The primary structure comprises 348 residues: tRNA pseudouridine synthase D (348 aa).

The active-site Nucleophile is Asp-78. Residues 150–304 (GLPNFFGPQR…AEGTRRAARL (155 aa)) enclose the TRUD domain.

Belongs to the pseudouridine synthase TruD family.

The enzyme catalyses uridine(13) in tRNA = pseudouridine(13) in tRNA. Responsible for synthesis of pseudouridine from uracil-13 in transfer RNAs. In Anaeromyxobacter dehalogenans (strain 2CP-1 / ATCC BAA-258), this protein is tRNA pseudouridine synthase D.